A 441-amino-acid chain; its full sequence is Trigger factor (441 aa).

One can recognise a PPIase FKBP-type domain in the interval 161–246 (GDQVTIDFVG…VSEVAEQILP (86 aa)).

The protein belongs to the FKBP-type PPIase family. Tig subfamily.

It localises to the cytoplasm. It catalyses the reaction [protein]-peptidylproline (omega=180) = [protein]-peptidylproline (omega=0). Functionally, involved in protein export. Acts as a chaperone by maintaining the newly synthesized protein in an open conformation. Functions as a peptidyl-prolyl cis-trans isomerase. This Marinomonas sp. (strain MWYL1) protein is Trigger factor.